The primary structure comprises 810 residues: Nuclear pore complex protein NUP88 (810 aa).

The tract at residues 1–23 (MKFNFNETEDAPDSRRSPTPKEP) is disordered. The stretch at 646 to 748 (APNLKRIIDD…RARVKKSTQK (103 aa)) forms a coiled coil.

As to quaternary structure, part of the nuclear pore complex (NPC). The NPC has an eight-fold symmetrical structure comprising a central transport channel and two rings, the cytoplasmic and nuclear rings, to which eight filaments are attached. The cytoplasmic filaments have loose ends, while the nuclear filaments are joined in a distal ring, forming a nuclear basket. NPCs are highly dynamic in configuration and composition, and can be devided in 3 subcomplexes, the NUP62 subcomplex, the NUP107-160 subcomplex and the NUP93 subcomplex, containing approximately 30 different nucleoporin proteins.

It is found in the nucleus envelope. Its subcellular location is the nucleus. It localises to the nuclear pore complex. In terms of biological role, involved in the regulation of exportin-mediated nuclear protein export. Required for resistance mediated by multiple R proteins and for the appropriate nuclear accumulation of SNC1 and of the downstream defense signaling components EDS1 and NPR1. Not involved in salt tolerance, ethylene and auxin responses, but required for systemic acquired resistance. In Arabidopsis thaliana (Mouse-ear cress), this protein is Nuclear pore complex protein NUP88.